The chain runs to 684 residues: Methionine--tRNA ligase (684 aa).

The 'HIGH' region motif lies at 17-27; it reads PYANGKAHVGH. Cysteine 148, cysteine 151, cysteine 160, and cysteine 164 together coordinate Zn(2+). The 'KMSKS' region signature appears at 330 to 334; the sequence is TFSKS. Lysine 333 is an ATP binding site. The 103-residue stretch at 582-684 folds into the tRNA-binding domain; it reads DFSKLDIRIG…KETNPGTCIH (103 aa).

Belongs to the class-I aminoacyl-tRNA synthetase family. MetG type 1 subfamily. In terms of assembly, homodimer. The cofactor is Zn(2+).

The protein resides in the cytoplasm. It carries out the reaction tRNA(Met) + L-methionine + ATP = L-methionyl-tRNA(Met) + AMP + diphosphate. Is required not only for elongation of protein synthesis but also for the initiation of all mRNA translation through initiator tRNA(fMet) aminoacylation. The polypeptide is Methionine--tRNA ligase (Methanococcoides burtonii (strain DSM 6242 / NBRC 107633 / OCM 468 / ACE-M)).